The chain runs to 201 residues: Regulator of G-protein signaling rgs-1 (201 aa).

The RGS domain maps to 37–156 (SWQQSFDTLM…FLTSIFYRET (120 aa)). Residues 168 to 201 (GGDEEKEREQRAERARLNVPATAAEGSSKDISMV) form a disordered region. Positions 170–183 (DEEKEREQRAERAR) are enriched in basic and acidic residues.

As to expression, expressed in most or all neurons.

Functionally, inhibits G protein signaling in nervous system, interacting preferentially with the G(O) subfamily member goa-1. In vitro, protein acts as a GTPase activator of goa-1. Rgs-1 and rgs-2 redundantly adjust signaling when worms are fed to allow rapid induction of egg-laying behavior. In Caenorhabditis elegans, this protein is Regulator of G-protein signaling rgs-1 (rgs-1).